The primary structure comprises 336 residues: Probable G-protein coupled receptor 160 (336 aa).

Topologically, residues 1-20 are extracellular; sequence MTALSSKNCSLQYQLHQSPQ. N8 carries N-linked (GlcNAc...) asparagine glycosylation. A helical transmembrane segment spans residues 21-41; sequence LLEASCLLFLIILGKVLLNIL. Residues 42–56 lie on the Cytoplasmic side of the membrane; it reads LLRVRRGDARWTLME. A helical transmembrane segment spans residues 57-77; that stretch reads YFCFSLALVDLLLLVNISILT. Residues 78-95 are Extracellular-facing; that stretch reads YFRDFVVLGIRFTRYHIC. Residues 96–116 form a helical membrane-spanning segment; sequence LLTQIISFTYGFLHYPVCSLA. At 117 to 136 the chain is on the cytoplasmic side; that stretch reads CIDYWCNLSRASKQSSRWQK. A helical transmembrane segment spans residues 137 to 157; it reads LLYFLTVILTWISVLAYVLVD. Residues 158 to 186 lie on the Extracellular side of the membrane; sequence PAISVSLKAHRGYVYQCPAYVSTQSHWLS. Residues 187–207 traverse the membrane as a helical segment; it reads LSMLMVLFVAFLISWQEVVAL. The Cytoplasmic portion of the chain corresponds to 208-243; it reads LQAMRIASYKSKAALYFPFPLHCGYALSCREALLPR. A helical membrane pass occupies residues 244–264; it reads LIVCFLGTWFPFVALQVLILS. Topologically, residues 265–272 are extracellular; it reads LRVQIPAY. A helical transmembrane segment spans residues 273 to 293; sequence IEMNVPWLYFVNSFLIAAVYW. At 294 to 336 the chain is on the cytoplasmic side; the sequence is FNCHKLDLRDSSLPVDPFINWKCCFVPVHRLKQVERPMSIVIC.

This sequence belongs to the G-protein coupled receptor 1 family.

The protein resides in the cell membrane. Orphan receptor. The sequence is that of Probable G-protein coupled receptor 160 (Gpr160) from Mus musculus (Mouse).